A 111-amino-acid chain; its full sequence is Large ribosomal subunit protein uL22 (111 aa).

The protein belongs to the universal ribosomal protein uL22 family. As to quaternary structure, part of the 50S ribosomal subunit.

Its function is as follows. This protein binds specifically to 23S rRNA; its binding is stimulated by other ribosomal proteins, e.g. L4, L17, and L20. It is important during the early stages of 50S assembly. It makes multiple contacts with different domains of the 23S rRNA in the assembled 50S subunit and ribosome. Functionally, the globular domain of the protein is located near the polypeptide exit tunnel on the outside of the subunit, while an extended beta-hairpin is found that lines the wall of the exit tunnel in the center of the 70S ribosome. The sequence is that of Large ribosomal subunit protein uL22 from Chlamydia pneumoniae (Chlamydophila pneumoniae).